A 1479-amino-acid chain; its full sequence is Chromosome partition protein MukB (1479 aa).

34 to 41 (GGNGAGKS) serves as a coordination point for ATP. 5 coiled-coil regions span residues 337–418 (LNLV…QYQQ), 511–603 (QAER…RAPV), 780–810 (RAAR…DVQK), 847–1116 (ELDR…AKAG), and 1206–1265 (DDPV…LQAV). The interval 666 to 783 (PGGSEDPRLN…EVPLFGRAAR (118 aa)) is flexible hinge.

This sequence belongs to the SMC family. MukB subfamily. Homodimerization via its hinge domain. Binds to DNA via its C-terminal region. Interacts, and probably forms a ternary complex, with MukE and MukF via its C-terminal region. The complex formation is stimulated by calcium or magnesium. Interacts with tubulin-related protein FtsZ.

The protein resides in the cytoplasm. The protein localises to the nucleoid. In terms of biological role, plays a central role in chromosome condensation, segregation and cell cycle progression. Functions as a homodimer, which is essential for chromosome partition. Involved in negative DNA supercoiling in vivo, and by this means organize and compact chromosomes. May achieve or facilitate chromosome segregation by condensation DNA from both sides of a centrally located replisome during cell division. The sequence is that of Chromosome partition protein MukB from Pectobacterium carotovorum subsp. carotovorum (strain PC1).